A 421-amino-acid chain; its full sequence is Glutamate-1-semialdehyde 2,1-aminomutase 1 (421 aa).

At Lys258 the chain carries N6-(pyridoxal phosphate)lysine.

The protein belongs to the class-III pyridoxal-phosphate-dependent aminotransferase family. HemL subfamily. The cofactor is pyridoxal 5'-phosphate.

It is found in the cytoplasm. The enzyme catalyses (S)-4-amino-5-oxopentanoate = 5-aminolevulinate. It participates in porphyrin-containing compound metabolism; protoporphyrin-IX biosynthesis; 5-aminolevulinate from L-glutamyl-tRNA(Glu): step 2/2. The chain is Glutamate-1-semialdehyde 2,1-aminomutase 1 from Cenarchaeum symbiosum (strain A).